The chain runs to 2784 residues: MAQPETLHQVLAQPADASRVKQLQTVHEAITASLSGQQPGARVGLETLVLCAEAALKVGSLDVAHDCLERYFLEQRRYTVGMAPVELRDQYLCRAHFARGLLVSERSKGLKGKALIDGTLEGVKHVMAGLEVAAANQPRYQFLVYNASVHHWRVVAPLHRDGLRHHLLASTDRVVQALDKVPGHEEWKVRIYTALALCQSDAATVAAAQAEAAGGKAPAKGGGGAAATHDDAAKTLQRAYDTAAAAKLTELQKDVARLQVHLATLAAAAGGKGAKAGGGGAAGGAGKPGAKGAAAALDEEGALRLIQAVLTGRPDRAVAEQQLREAVAKVDPKGPDGPVKGALLRPVSRAAWAAALAGLPELAERWASRAAASSDSGPRTWSDMTRVQLALQALGPAGDTSLAPVVVAAHVKALEQLEDVLTTFTKLADVEGIHAAARLAWNAGLLLLQPGLRKHVKRAFNAAARALAVAASPLTRLRAALHLEAGKCDAAEEALIKAGQEVGKALALDYLPPPAEAAAVPWLARPLDRWAAPLARALALRTSAEPANPEEEAVSLIERSKESRNPAIKSDLLARAREKLRDLPHPPPPAPTDPPGPDRDAAHAAARRRTAVWAELMRSAASSRMDEHVLAAAPHALCVSWDPAVDREMVLLQAQLAHYEAEAAISALRRRRADISPPTRPSPPEVDGEGVRQPPATTEQLQELVVQASVRSMRGAMSVNEPWLTLNNAVQLYNAALPLMQQHRYADLYRWLRPVAEALVALPVADSDGPLAVAVAEALGRAAEHRLLLATLRAKAARDAGQELEDDDDEDSLDEDGNPPPAGDAGPHFNRRSPAYKPLPDARVAASGLDPRGFPALARLLASIGTVTAVAEAALERAGGASTQGLLEMYARLQQYRGVSSGLPAGAAAASAATSRVVSAIEALSSANRVNEEKQPAGAGAEKGGGDKGRKPHGSLAADAAAAIALLRALPGGPPLELWAKMARAVADAGVWPAALECSAAALAALPGAGRDLDVLRLEAPSDVPEMTPAGWFWASVALSVRAAALLTLVDLPSQGAATALTVRREALLHAAQAARCAAFVNKADLCESACRVAWNAALPFTTKPLLRAALIRPLGTAVEALNRVGPADKGFQVRMNCLYVESLAAAKRWGDAVAACDAASRAVKSRSLHRPLMGWKAACLAMLGKNVNAEMTKVKEHPPEAQAYAWSVLSHHSAARYDQIAAHKAAGEAVEHHGWLKAVALAGYAEWLLSSSDDKEAAEDALLAAADALLEFDTGDLDGDGTDDEDDATKAKPRSRSGGGSSSGRAGGGFRRVLSRSYSRGGGGSADGARPSEGGEGAGPAAPDPNRVPEELGSTHLERLARLYVMACQAAPNATDHTDYMLAAHHNFMRLLTQALHSAAHTAFVAARDSYNGEVAAAALEGRDPPPETPLPKPYAVVPDTLIGWGTWQITPELLETLASDAATGAVTALSRELLPQAELTLAYLELLQACLRARGYHCHCLGLAQLQRVLARMVLRDEGMYVATSLGLVAALDELGLSREAGEVEAALGDVACIGPQEEAQAAEQAALADLVLAAAGKLEAARPRSALAVGRLSFLAGGVRRANNAANAAAAAPLPPVAAASQAAAAADAAAAASFTAAGGGRGGRESPSPHDDGIHYIGGPAPGDSHGQLPEWMEDAARELGNVDLAGSAGGLLSHVSGQLLLRPFTLHDVWLKKGDYLLRRGHYAAARQLLSRARAHAADCGNREAEARCLLALSRTELAAHNPVEAVALVQAAQRFGGDIDFWAELLVQYVDCRLAGAHSTTSDAREALQGGIAMFLALARDDRAAEKPASAAGAVLRVRLARLLLTDMEMLRGQGVSTWRKSYDGAVTLVNQAIMALAAREAGLPHIEALLVQAELMLAEPTHIKDLRPRLKKVEKVLLAAEEMAVRFHAEATPRDLAPRCVTPTARLLACVRCRLAEVQLAAAEERERLAGADREKARPKFPHMRGKRDVQVVIDFIDEAGGAPPAPPGLLPEDSALALATGAAALVAAAPRDRARALLIAGRCLAFKFMMAAPEALDPLRPFVPPPKPPGAPKRPPAGAEEEEDEEGPDTAAADAAAEAAEAAATPEGAAALRLQAQAAAMLSSALASATSVQDWALGEQCALALSTLYGQLSPGLACRSLAAAQACRAAAGGQALLRAAAPAQQPEVLALAQRDKLSEVLPAPQDNVHYSALRRMLSGLKGAAARLDAAAAPPVEQQLAALPQDLRVLMLYLSPDGGRLYAAALNIPDATAEPTPPLNAEKSKKKTDASAPAAAGPRLSLLHVVEVDPAAVEALVAECRAYRRGVERTLREAIASAAAKGVGVPPEDDRPDSPSKKGKKPGSATKRPGSKQGPKSGPGAAAAAAAAAAAAGEAGKVQVFDSRLNEEWSGILEQFEEWLAPLAPWLEAAVPALPLPPPGSPDGKKEKKDKKEAAGPTKHKVALLLDPALQSLPWEAARHLATTCSEVSRSPSLQALAACHTLPRADSAAASEHAAAAAAAPAALPPLDLGRLTVIVDPRHECSTAQQARGPYTAQLIPALSAPELTQVLPAASWWGPGGPGGGLEGVPGRAPSPDTYASLLAGQATGGPCTGLLFLGVGRFAAHVPPAVLASAPLGGCEAALLFDRCNTDDAYWAQLYRDNRKSAEQRRLESPGRVATLLLAKGVRTVLVMSAAAPPAAVVKLMHGVMAGLAAGRVLGEVVYSLLTGGGGSGGAGAGVLDEFELAHLRACLQVWGAPGLLGAVLTQGNKAAKGAKK.

One copy of the TPR 1 repeat lies at 129–162; the sequence is GLEVAAANQPRYQFLVYNASVHHWRVVAPLHRDG. The stretch at 242–268 forms a coiled coil; it reads TAAAAKLTELQKDVARLQVHLATLAAA. Residues 401-434 form a TPR 2 repeat; the sequence is SLAPVVVAAHVKALEQLEDVLTTFTKLADVEGIH. Disordered regions lie at residues 543 to 562 and 581 to 607; these read SAEP…RSKE and RDLP…AAAR. Residues 585 to 595 are compositionally biased toward pro residues; sequence HPPPPAPTDPP. Positions 644–665 form a coiled coil; the sequence is AVDREMVLLQAQLAHYEAEAAI. The tract at residues 670 to 697 is disordered; the sequence is RRRADISPPTRPSPPEVDGEGVRQPPAT. One copy of the TPR 3 repeat lies at 708-743; that stretch reads ASVRSMRGAMSVNEPWLTLNNAVQLYNAALPLMQQH. Disordered stretches follow at residues 799–837 and 929–954; these read DAGQ…PAYK and RVNE…KPHG. Residues 802-817 show a composition bias toward acidic residues; it reads QELEDDDDEDSLDEDG. The TPR 4 repeat unit spans residues 976–1009; that stretch reads LELWAKMARAVADAGVWPAALECSAAALAALPGA. Acidic residues predominate over residues 1275–1288; sequence TGDLDGDGTDDEDD. Disordered regions lie at residues 1275–1351 and 1640–1673; these read TGDL…RVPE and AAGG…HGQL. Positions 1298 to 1311 are enriched in gly residues; sequence SGGGSSSGRAGGGF. Residues 1646 to 1658 show a composition bias toward basic and acidic residues; that stretch reads GGRESPSPHDDGI. 2 TPR repeats span residues 1712 to 1745 and 1854 to 1886; these read HDVW…AADC and MEML…LAAR. Residues 1961-1984 are a coiled coil; it reads RLAEVQLAAAEERERLAGADREKA. Disordered stretches follow at residues 2068–2112, 2278–2303, 2346–2389, and 2441–2465; these read RPFV…EAAA, ATAE…PAAA, AAKG…PGAA, and LPLP…AGPT. A compositionally biased stretch (pro residues) spans 2069 to 2083; sequence PFVPPPKPPGAPKRP. Positions 2087–2096 are enriched in acidic residues; the sequence is AEEEEDEEGP. Low complexity predominate over residues 2097–2112; it reads DTAAADAAAEAAEAAA. Residues 2378–2389 are compositionally biased toward low complexity; the sequence is SKQGPKSGPGAA. Residues 2450-2461 are compositionally biased toward basic and acidic residues; it reads DGKKEKKDKKEA. One copy of the TPR 7 repeat lies at 2613–2646; the sequence is ATGGPCTGLLFLGVGRFAAHVPPAVLASAPLGGC.

It belongs to the CFAP46 family. Part of the PDCP1 complex composed of CFAP46, CFAP54, CFAP74 and CFAP221; the PDCP1 complex binds calmodulin.

The protein resides in the cytoplasm. It is found in the cytoskeleton. Its subcellular location is the cilium axoneme. Functionally, as part of the central apparatus of the cilium axoneme plays a role in cilium movement and thereby cell motility. This is Cilia- and flagella-associated protein 46 from Chlamydomonas reinhardtii (Chlamydomonas smithii).